A 211-amino-acid polypeptide reads, in one-letter code: MPKPFDLTLYLVTDPRLVAARGLLTTVDAAVKGGATIVQLRDPDAHGRALVEQARALKALLAPLGIPLIINDRVDVAVAADADGVHLGQDDMTPADARAVLGPQRILGLSVGNPAEYAASDLSGVDYLGVGPVKATGTKADAGGAIGAAGVGAVRALTRLPLVGIGGLATADVADVIRAGADGVAVVSSICAASDPEQAARALKAAVLAAR.

Residues 39–41 (QLR) and Asn-71 contribute to the 4-amino-2-methyl-5-(diphosphooxymethyl)pyrimidine site. Mg(2+) is bound by residues Asp-72 and Asp-91. Ser-110 is a 4-amino-2-methyl-5-(diphosphooxymethyl)pyrimidine binding site. 136–138 (TGT) contributes to the 2-[(2R,5Z)-2-carboxy-4-methylthiazol-5(2H)-ylidene]ethyl phosphate binding site. Lys-139 is a 4-amino-2-methyl-5-(diphosphooxymethyl)pyrimidine binding site. 2-[(2R,5Z)-2-carboxy-4-methylthiazol-5(2H)-ylidene]ethyl phosphate-binding positions include Gly-167 and 187-188 (VS).

It belongs to the thiamine-phosphate synthase family. It depends on Mg(2+) as a cofactor.

The enzyme catalyses 2-[(2R,5Z)-2-carboxy-4-methylthiazol-5(2H)-ylidene]ethyl phosphate + 4-amino-2-methyl-5-(diphosphooxymethyl)pyrimidine + 2 H(+) = thiamine phosphate + CO2 + diphosphate. It catalyses the reaction 2-(2-carboxy-4-methylthiazol-5-yl)ethyl phosphate + 4-amino-2-methyl-5-(diphosphooxymethyl)pyrimidine + 2 H(+) = thiamine phosphate + CO2 + diphosphate. The catalysed reaction is 4-methyl-5-(2-phosphooxyethyl)-thiazole + 4-amino-2-methyl-5-(diphosphooxymethyl)pyrimidine + H(+) = thiamine phosphate + diphosphate. It participates in cofactor biosynthesis; thiamine diphosphate biosynthesis; thiamine phosphate from 4-amino-2-methyl-5-diphosphomethylpyrimidine and 4-methyl-5-(2-phosphoethyl)-thiazole: step 1/1. Functionally, condenses 4-methyl-5-(beta-hydroxyethyl)thiazole monophosphate (THZ-P) and 2-methyl-4-amino-5-hydroxymethyl pyrimidine pyrophosphate (HMP-PP) to form thiamine monophosphate (TMP). The chain is Thiamine-phosphate synthase from Xanthobacter autotrophicus (strain ATCC BAA-1158 / Py2).